The sequence spans 210 residues: Orotate phosphoribosyltransferase (210 aa).

5-phospho-alpha-D-ribose 1-diphosphate contacts are provided by residues Arg94, Lys98, His100, and 120-128 (EDLISTGGS). Position 124 (Ser124) interacts with orotate.

The protein belongs to the purine/pyrimidine phosphoribosyltransferase family. PyrE subfamily. Homodimer. The cofactor is Mg(2+).

The enzyme catalyses orotidine 5'-phosphate + diphosphate = orotate + 5-phospho-alpha-D-ribose 1-diphosphate. The protein operates within pyrimidine metabolism; UMP biosynthesis via de novo pathway; UMP from orotate: step 1/2. Its function is as follows. Catalyzes the transfer of a ribosyl phosphate group from 5-phosphoribose 1-diphosphate to orotate, leading to the formation of orotidine monophosphate (OMP). The chain is Orotate phosphoribosyltransferase from Bacillus mycoides (strain KBAB4) (Bacillus weihenstephanensis).